Reading from the N-terminus, the 198-residue chain is Recombination protein RecR (198 aa).

The C4-type zinc finger occupies 57–72; that stretch reads CSVCGNLTDEDPCAIC. Positions 80 to 175 constitute a Toprim domain; the sequence is STILIVEDSR…KVTRLARGLA (96 aa).

The protein belongs to the RecR family.

Functionally, may play a role in DNA repair. It seems to be involved in an RecBC-independent recombinational process of DNA repair. It may act with RecF and RecO. The chain is Recombination protein RecR from Streptococcus sanguinis (strain SK36).